Consider the following 221-residue polypeptide: Putative hemin import ATP-binding protein HrtA (221 aa).

One can recognise an ABC transporter domain in the interval 3-221; sequence LVVEDIVKNF…IELEDGKITD (219 aa). 39-46 is a binding site for ATP; it reads GASGSGKT.

The protein belongs to the ABC transporter superfamily. HrtA family. In terms of assembly, the complex is composed of two ATP-binding proteins (HrtA), two transmembrane proteins (HrtB) and a solute-binding protein.

It is found in the cell membrane. In terms of biological role, part of the ABC transporter complex hrt involved in hemin import. Responsible for energy coupling to the transport system. The chain is Putative hemin import ATP-binding protein HrtA (hrtA) from Staphylococcus aureus (strain bovine RF122 / ET3-1).